The following is a 386-amino-acid chain: Synaptotagmin-5 (386 aa).

Residues 1 to 16 show a composition bias toward pro residues; that stretch reads MFPEPPTLGSPAPKTP. The disordered stretch occupies residues 1–21; sequence MFPEPPTLGSPAPKTPPDSSR. At 1–24 the chain is on the vesicular side; that stretch reads MFPEPPTLGSPAPKTPPDSSRIRQ. The helical transmembrane segment at 25–45 threads the bilayer; the sequence is GAVPAWVLATIVLGSGLLVFS. At 46–386 the chain is on the cytoplasmic side; it reads SCFCLYRKRC…PDRARPIPAP (341 aa). C2 domains lie at 108-227 and 239-372; these read QLGR…QAWR and KLGD…AQWH. Positions 138, 139, 145, 197, 198, 199, 202, 205, 270, 276, 330, and 332 each coordinate Ca(2+).

Belongs to the synaptotagmin family. In terms of assembly, homodimer. Interacts with both alpha- and beta-tubulin. Ca(2+) is required as a cofactor.

The protein localises to the cytoplasmic vesicle. Its subcellular location is the secretory vesicle. It is found in the synaptic vesicle membrane. It localises to the recycling endosome membrane. May be involved in Ca(2+)-dependent exocytosis of secretory vesicles through Ca(2+) and phospholipid binding to the C2 domain or may serve as Ca(2+) sensors in the process of vesicular trafficking and exocytosis. Regulates the Ca(2+)-dependent secretion of norepinephrine in PC12 cells. Required for export from the endocytic recycling compartment to the cell surface. This chain is Synaptotagmin-5 (Syt5), found in Mus musculus (Mouse).